Consider the following 168-residue polypeptide: SsrA-binding protein (168 aa).

This sequence belongs to the SmpB family.

It is found in the cytoplasm. Its function is as follows. Required for rescue of stalled ribosomes mediated by trans-translation. Binds to transfer-messenger RNA (tmRNA), required for stable association of tmRNA with ribosomes. tmRNA and SmpB together mimic tRNA shape, replacing the anticodon stem-loop with SmpB. tmRNA is encoded by the ssrA gene; the 2 termini fold to resemble tRNA(Ala) and it encodes a 'tag peptide', a short internal open reading frame. During trans-translation Ala-aminoacylated tmRNA acts like a tRNA, entering the A-site of stalled ribosomes, displacing the stalled mRNA. The ribosome then switches to translate the ORF on the tmRNA; the nascent peptide is terminated with the 'tag peptide' encoded by the tmRNA and targeted for degradation. The ribosome is freed to recommence translation, which seems to be the essential function of trans-translation. In Mycobacterium sp. (strain JLS), this protein is SsrA-binding protein.